Here is a 228-residue protein sequence, read N- to C-terminus: Pyridoxal phosphate homeostasis protein (228 aa).

K35 bears the N6-(pyridoxal phosphate)lysine mark.

Belongs to the pyridoxal phosphate-binding protein YggS/PROSC family.

In terms of biological role, pyridoxal 5'-phosphate (PLP)-binding protein, which is involved in PLP homeostasis. The chain is Pyridoxal phosphate homeostasis protein from Aquifex aeolicus (strain VF5).